A 208-amino-acid polypeptide reads, in one-letter code: MARYRGSVCRICRRENLKLFLKGDRCYSDKCAFDRRSYPPGQHGQRRTKISDYGIQLREKQKIKRMYGLTEKQFHLTFKKADHAKGITGTNLLVNLERRLDNVIYRLGFADCRTQARQMVRHNHFTVNGHKVNIPSAQVSIGDTIEVREKSRTVAVITNAMEAVARRGLPQWLELDKANFKGVVNAYPVREDLTMPMQEQLIVELYSK.

An S4 RNA-binding domain is found at 98–159 (RRLDNVIYRL…KSRTVAVITN (62 aa)).

Belongs to the universal ribosomal protein uS4 family. Part of the 30S ribosomal subunit. Contacts protein S5. The interaction surface between S4 and S5 is involved in control of translational fidelity.

Functionally, one of the primary rRNA binding proteins, it binds directly to 16S rRNA where it nucleates assembly of the body of the 30S subunit. With S5 and S12 plays an important role in translational accuracy. The chain is Small ribosomal subunit protein uS4 from Desulfatibacillum aliphaticivorans.